A 258-amino-acid chain; its full sequence is Acetylglutamate kinase (258 aa).

Residues 44–45 (GG), Arg-66, and Asn-158 each bind substrate. ATP is bound by residues 181-186 (DVSGIL) and 209-211 (IIT).

Belongs to the acetylglutamate kinase family. ArgB subfamily. In terms of assembly, homodimer.

It is found in the cytoplasm. It catalyses the reaction N-acetyl-L-glutamate + ATP = N-acetyl-L-glutamyl 5-phosphate + ADP. It participates in amino-acid biosynthesis; L-arginine biosynthesis; N(2)-acetyl-L-ornithine from L-glutamate: step 2/4. Its function is as follows. Catalyzes the ATP-dependent phosphorylation of N-acetyl-L-glutamate. The sequence is that of Acetylglutamate kinase from Escherichia coli O6:K15:H31 (strain 536 / UPEC).